The primary structure comprises 103 residues: Turripeptide OL55-like (103 aa).

In terms of processing, contains 8 disulfide bonds. Expressed by the venom duct.

The protein localises to the secreted. In terms of biological role, acts as a neurotoxin by inhibiting an ion channel. This chain is Turripeptide OL55-like, found in Lophiotoma albina (Sea snail).